The sequence spans 824 residues: Intraflagellar transport protein 88 homolog (824 aa).

A disordered region spans residues 113–134 (FDPLSQSRGPASPLEAKKKDSP). 12 TPR repeats span residues 197–230 (YSVL…KMFS), 233–266 (GILK…VPSV), 272–305 (IKIM…APNL), 307–338 (AGYN…PLEI), 415–448 (NDLE…DSRV), 450–483 (SAAA…DRYN), 484–517 (PAAL…DSSC), 518–551 (TEAL…LRNS), 552–585 (AEVL…IPTD), 586–619 (PQVL…FPCN), 620–653 (IEVI…QPTQ), and 654–687 (VKWQ…FPEN). The interval 724 to 824 (EQRIKSGRDG…EELGDDLLPE (101 aa)) is disordered. The segment covering 748–757 (DSGQNYSASS) has biased composition (polar residues). The span at 797–808 (ERPKTAAKKRID) shows a compositional bias: basic and acidic residues. Acidic residues predominate over residues 809–824 (EDDFADEELGDDLLPE).

As to quaternary structure, component of the IFT complex B, at least composed of IFT20, IFT22, IFT25, IFT27, IFT46, IFT52, TRAF3IP1/IFT54, IFT57, IFT74, IFT80, IFT81, and IFT88. Interacts with IFT20, IFT22, IFT25, IFT27, IFT52, TRAF3IP1, IFT74, IFT80 and IFT81. Interacts with IFT172. Interacts with IFT57. Interacts with IFT46. Interacts with IFT70B. Interacts with C2CD3. Interacts with ENTR1 (via N-terminus). Interacts with LRRC56. Interacts with DZIP1. Interacts with CCDC38. Interacts with CCDC146. Interacts with CFAP53. As to expression, expressed in the heart, brain, liver, lung, kidney, skeletal muscle and pancreas.

The protein resides in the cytoplasm. Its subcellular location is the cytoskeleton. It is found in the microtubule organizing center. The protein localises to the centrosome. It localises to the centriole. The protein resides in the cell projection. Its subcellular location is the cilium. It is found in the cilium basal body. The protein localises to the flagellum. In terms of biological role, positively regulates primary cilium biogenesis. Also involved in autophagy since it is required for trafficking of ATG16L and the expansion of the autophagic compartment. The polypeptide is Intraflagellar transport protein 88 homolog (IFT88) (Homo sapiens (Human)).